Consider the following 142-residue polypeptide: AP-2 complex subunit sigma (142 aa).

The protein belongs to the adaptor complexes small subunit family. In terms of assembly, adaptor protein complex 2 (AP-2) is a heterotetramer composed of two large adaptins (alpha-type and beta-type subunits), a medium adaptin (mu-type subunit AP50) and a small adaptin (sigma-type subunit AP17).

The protein resides in the cell membrane. It is found in the membrane. The protein localises to the coated pit. Component of the adaptor complexes which link clathrin to receptors in coated vesicles. Clathrin-associated protein complexes are believed to interact with the cytoplasmic tails of membrane proteins, leading to their selection and concentration. The chain is AP-2 complex subunit sigma (ap2s1) from Dictyostelium discoideum (Social amoeba).